Consider the following 56-residue polypeptide: uncharacterized protein (56 aa).

Residues 6–26 form a helical membrane-spanning segment; that stretch reads MLLIMLYMVLVVNDLILYNIL.

It localises to the membrane. This is an uncharacterized protein from Dictyostelium discoideum (Social amoeba).